Reading from the N-terminus, the 73-residue chain is Toxin Td12 (73 aa).

Residues 1–7 (IGMVIEC) form the signal peptide. Residues 8–70 (KDGYLMEPNG…TWDRATNTCG (63 aa)) form the LCN-type CS-alpha/beta domain. 4 disulfide bridges follow: Cys-18-Cys-69, Cys-22-Cys-44, Cys-30-Cys-50, and Cys-34-Cys-52. Arg-71 carries the post-translational modification Arginine amide.

Belongs to the long (4 C-C) scorpion toxin superfamily. Sodium channel inhibitor family. Beta subfamily. In terms of tissue distribution, expressed by the venom gland.

It is found in the secreted. In terms of biological role, beta toxins bind voltage-independently at site-4 of sodium channels (Nav) and shift the voltage of activation toward more negative potentials thereby affecting sodium channel activation and promoting spontaneous and repetitive firing. The protein is Toxin Td12 of Tityus discrepans (Venezuelan scorpion).